Here is a 185-residue protein sequence, read N- to C-terminus: Elongation factor P (185 aa).

Belongs to the elongation factor P family.

Its subcellular location is the cytoplasm. It functions in the pathway protein biosynthesis; polypeptide chain elongation. Its function is as follows. Involved in peptide bond synthesis. Stimulates efficient translation and peptide-bond synthesis on native or reconstituted 70S ribosomes in vitro. Probably functions indirectly by altering the affinity of the ribosome for aminoacyl-tRNA, thus increasing their reactivity as acceptors for peptidyl transferase. The chain is Elongation factor P from Streptococcus pyogenes serotype M28 (strain MGAS6180).